The sequence spans 131 residues: Ribonuclease VapC13 (131 aa).

The 127-residue stretch at 2–128 (ILVDSNIPMY…RGFDSYPGIK (127 aa)) folds into the PINc domain. Residues aspartate 5 and aspartate 99 each contribute to the Mg(2+) site.

The protein belongs to the PINc/VapC protein family. Mg(2+) serves as cofactor.

Its subcellular location is the secreted. In terms of biological role, toxic component of a type II toxin-antitoxin (TA) system. An RNase. The cognate antitoxin is VapB13. This chain is Ribonuclease VapC13, found in Mycobacterium tuberculosis (strain ATCC 25618 / H37Rv).